The sequence spans 264 residues: Fibroblast growth factor 5 (264 aa).

An N-terminal signal peptide occupies residues 1-20 (MSLSLLFLIFCSHLIHSAWA). Residues 25–81 (RLTPEGQPAPPRNPGDSSGSRGRSSATFSSSSASSPVAASPGSQGSGSEHSSFQWSP) are disordered. Residues 38–72 (PGDSSGSRGRSSATFSSSSASSPVAASPGSQGSGS) are compositionally biased toward low complexity. N-linked (GlcNAc...) asparagine glycosylation occurs at Asn-108. The segment at 227–254 (FTVTVPEKKKPPVKPKVPLSQPRRSPSP) is disordered.

It belongs to the heparin-binding growth factors family. In terms of assembly, interacts with FGFR1 and FGFR2. Affinity between fibroblast growth factors (FGFs) and their receptors is increased by heparan sulfate glycosaminoglycans that function as coreceptors.

Its subcellular location is the secreted. Its function is as follows. Plays an important role in the regulation of cell proliferation and cell differentiation. Required for normal regulation of the hair growth cycle. Functions as an inhibitor of hair elongation by promoting progression from anagen, the growth phase of the hair follicle, into catagen the apoptosis-induced regression phase. This Mus musculus (Mouse) protein is Fibroblast growth factor 5 (Fgf5).